Here is a 138-residue protein sequence, read N- to C-terminus: Small ribosomal subunit protein uS11c (138 aa).

A disordered region spans residues 1-22; it reads MAKSIPRISSRRNGPIGSGKTV.

Belongs to the universal ribosomal protein uS11 family. Part of the 30S ribosomal subunit.

It is found in the plastid. In Cuscuta exaltata (Tall dodder), this protein is Small ribosomal subunit protein uS11c.